The primary structure comprises 146 residues: Putative pre-16S rRNA nuclease (146 aa).

Belongs to the YqgF nuclease family.

It localises to the cytoplasm. Functionally, could be a nuclease involved in processing of the 5'-end of pre-16S rRNA. This Dechloromonas aromatica (strain RCB) protein is Putative pre-16S rRNA nuclease.